The sequence spans 238 residues: Ribonuclease PH (238 aa).

Residues arginine 86 and 124-126 (GTR) each bind phosphate.

This sequence belongs to the RNase PH family. Homohexameric ring arranged as a trimer of dimers.

It carries out the reaction tRNA(n+1) + phosphate = tRNA(n) + a ribonucleoside 5'-diphosphate. Phosphorolytic 3'-5' exoribonuclease that plays an important role in tRNA 3'-end maturation. Removes nucleotide residues following the 3'-CCA terminus of tRNAs; can also add nucleotides to the ends of RNA molecules by using nucleoside diphosphates as substrates, but this may not be physiologically important. Probably plays a role in initiation of 16S rRNA degradation (leading to ribosome degradation) during starvation. The chain is Ribonuclease PH from Brucella anthropi (strain ATCC 49188 / DSM 6882 / CCUG 24695 / JCM 21032 / LMG 3331 / NBRC 15819 / NCTC 12168 / Alc 37) (Ochrobactrum anthropi).